The following is a 96-amino-acid chain: Alpha-elapitoxin-Al2b (96 aa).

A signal peptide spans 1 to 21 (MKTLLLTLVVVTIVCLDFGGG). Intrachain disulfides connect C24-C41, C34-C62, C47-C51, C66-C77, and C78-C83.

The protein belongs to the three-finger toxin family. Long-chain subfamily. Type II alpha-neurotoxin sub-subfamily. As to expression, expressed by the venom gland.

The protein resides in the secreted. Its function is as follows. Potent long-chain postsynaptic neurotoxin. Pseudo-irreversibly inhibits the nicotinic acetylcholine receptor through competitive antagonism. The polypeptide is Alpha-elapitoxin-Al2b (Austrelaps labialis (Pygmy copperhead)).